The sequence spans 504 residues: Glycerol kinase (504 aa).

T14 contributes to the ADP binding site. The ATP site is built by T14, T15, and S16. T14 is a sn-glycerol 3-phosphate binding site. An ADP-binding site is contributed by R18. Residues R84, E85, Y136, and D246 each coordinate sn-glycerol 3-phosphate. R84, E85, Y136, D246, and Q247 together coordinate glycerol. Positions 268 and 311 each coordinate ADP. Positions 268, 311, 315, and 412 each coordinate ATP. The ADP site is built by G412 and N416.

It belongs to the FGGY kinase family.

It catalyses the reaction glycerol + ATP = sn-glycerol 3-phosphate + ADP + H(+). It functions in the pathway polyol metabolism; glycerol degradation via glycerol kinase pathway; sn-glycerol 3-phosphate from glycerol: step 1/1. With respect to regulation, inhibited by fructose 1,6-bisphosphate (FBP). Its function is as follows. Key enzyme in the regulation of glycerol uptake and metabolism. Catalyzes the phosphorylation of glycerol to yield sn-glycerol 3-phosphate. The chain is Glycerol kinase from Aliivibrio salmonicida (strain LFI1238) (Vibrio salmonicida (strain LFI1238)).